The primary structure comprises 112 residues: Iron-sulfur cluster assembly protein CyaY (112 aa).

The protein belongs to the frataxin family.

Involved in iron-sulfur (Fe-S) cluster assembly. May act as a regulator of Fe-S biogenesis. In Herminiimonas arsenicoxydans, this protein is Iron-sulfur cluster assembly protein CyaY.